The sequence spans 324 residues: MHRTTRIKITELNPHLMCVLCGGYFIDATTIIECLHSFCKTCIVRYLETSKYCPICDVQVHKTRPLLNIRSDKTLQDIVYKLVPGLFKNEMKRRRDFYAAHPSADAANGSNEDRGEVADEEKRIITDDEIISLSIEFFDQSRLDRKVNKEKPKEEVNDKRYLRCPAAMTVMHLRKFLRSKMDIPNTFQIDVMYEEEPLKDYYTLMDIAYIYTWRRNGPLPLKYRVRPTCKRMKMSHQRDGLTNAGELESDSGSDKANSPAGGVPSTSSCLPSPSTPVQSPHPQFPHISSTMNGTSNSPSANHQSSFASRPRKSSLNGSSATSSG.

An RING-type zinc finger spans residues 18-57; that stretch reads CVLCGGYFIDATTIIECLHSFCKTCIVRYLETSKYCPICD. The short motif at 81-95 is the Nuclear localization signal element; it reads KLVPGLFKNEMKRRR. The interaction with PHC2 stretch occupies residues 160 to 180; sequence RYLRCPAAMTVMHLRKFLRSK. Positions 162–226 are interaction with E4F1; sequence LRCPAAMTVM…GPLPLKYRVR (65 aa). Residues 232-324 form a disordered region; it reads MKMSHQRDGL…LNGSSATSSG (93 aa). The span at 264–276 shows a compositional bias: low complexity; that stretch reads PSTSSCLPSPSTP. The span at 277 to 307 shows a compositional bias: polar residues; that stretch reads VQSPHPQFPHISSTMNGTSNSPSANHQSSFA. Low complexity predominate over residues 313–324; sequence SSLNGSSATSSG.

As to quaternary structure, component of a PRC1-like complex. Identified in a PRC1-like HPRC-H complex with CBX2, CBX4, CBX8, PHC1, PHC2, PHC3, RING1 and RNF2. Interacts with RNF2/RING2. Interacts with RING1. Part of a complex that contains RNF2, UB2D3 and BMI1, where RNF2 and BMI1 form a tight heterodimer, and UB2D3 interacts only with RNF2. The complex composed of RNF2, UB2D3 and BMI1 binds nucleosomes, and has activity only with nucleosomal histone H2A. Interacts with CBX7 and CBX8. Interacts with SPOP. Part of a complex consisting of BMI1, CUL3 and SPOP. Interacts with E4F1. Interacts with PHC2. Interacts with zinc finger protein ZNF277. May be part of a complex including at least ZNF277, BMI1 and RNF2/RING2. May be polyubiquitinated; which does not lead to proteasomal degradation. Monoubiquitinated. As to expression, detected in most organs with high expression levels in thymus, heart, brain and testis.

It is found in the nucleus. Its subcellular location is the cytoplasm. Component of a Polycomb group (PcG) multiprotein PRC1-like complex, a complex class required to maintain the transcriptionally repressive state of many genes, including Hox genes, throughout development. PcG PRC1 complex acts via chromatin remodeling and modification of histones; it mediates monoubiquitination of histone H2A 'Lys-119', rendering chromatin heritably changed in its expressibility. The complex composed of RNF2, UB2D3 and BMI1 binds nucleosomes, and has activity only with nucleosomal histone H2A. In the PRC1-like complex, regulates the E3 ubiquitin-protein ligase activity of RNF2/RING2. The protein is Polycomb complex protein BMI-1 (Bmi1) of Mus musculus (Mouse).